Consider the following 383-residue polypeptide: Queuine tRNA-ribosyltransferase (383 aa).

Asp89 acts as the Proton acceptor in catalysis. Residues 89 to 93 (DSGGF), Asp143, Gln187, and Gly214 contribute to the substrate site. Residues 245 to 251 (GVGDLID) form an RNA binding region. Residue Asp264 is the Nucleophile of the active site. The segment at 269–273 (TRNAR) is RNA binding; important for wobble base 34 recognition. Residues Cys302, Cys304, Cys307, and His333 each contribute to the Zn(2+) site.

It belongs to the queuine tRNA-ribosyltransferase family. In terms of assembly, homodimer. Within each dimer, one monomer is responsible for RNA recognition and catalysis, while the other monomer binds to the replacement base PreQ1. Zn(2+) is required as a cofactor.

The enzyme catalyses 7-aminomethyl-7-carbaguanine + guanosine(34) in tRNA = 7-aminomethyl-7-carbaguanosine(34) in tRNA + guanine. It functions in the pathway tRNA modification; tRNA-queuosine biosynthesis. Catalyzes the base-exchange of a guanine (G) residue with the queuine precursor 7-aminomethyl-7-deazaguanine (PreQ1) at position 34 (anticodon wobble position) in tRNAs with GU(N) anticodons (tRNA-Asp, -Asn, -His and -Tyr). Catalysis occurs through a double-displacement mechanism. The nucleophile active site attacks the C1' of nucleotide 34 to detach the guanine base from the RNA, forming a covalent enzyme-RNA intermediate. The proton acceptor active site deprotonates the incoming PreQ1, allowing a nucleophilic attack on the C1' of the ribose to form the product. After dissociation, two additional enzymatic reactions on the tRNA convert PreQ1 to queuine (Q), resulting in the hypermodified nucleoside queuosine (7-(((4,5-cis-dihydroxy-2-cyclopenten-1-yl)amino)methyl)-7-deazaguanosine). This Thermodesulfovibrio yellowstonii (strain ATCC 51303 / DSM 11347 / YP87) protein is Queuine tRNA-ribosyltransferase.